Reading from the N-terminus, the 157-residue chain is Small ribosomal subunit protein uS7 (157 aa).

Belongs to the universal ribosomal protein uS7 family. In terms of assembly, part of the 30S ribosomal subunit. Contacts proteins S9 and S11.

One of the primary rRNA binding proteins, it binds directly to 16S rRNA where it nucleates assembly of the head domain of the 30S subunit. Is located at the subunit interface close to the decoding center, probably blocks exit of the E-site tRNA. In Caldicellulosiruptor saccharolyticus (strain ATCC 43494 / DSM 8903 / Tp8T 6331), this protein is Small ribosomal subunit protein uS7.